A 385-amino-acid polypeptide reads, in one-letter code: UDP-N-acetylglucosamine--N-acetylmuramyl-(pentapeptide) pyrophosphoryl-undecaprenol N-acetylglucosamine transferase (385 aa).

Residues 24–26 (TAG), Asn143, Arg180, Ser214, and Gln310 contribute to the UDP-N-acetyl-alpha-D-glucosamine site.

The protein belongs to the glycosyltransferase 28 family. MurG subfamily.

It is found in the cell membrane. The enzyme catalyses di-trans,octa-cis-undecaprenyl diphospho-N-acetyl-alpha-D-muramoyl-L-alanyl-D-glutamyl-meso-2,6-diaminopimeloyl-D-alanyl-D-alanine + UDP-N-acetyl-alpha-D-glucosamine = di-trans,octa-cis-undecaprenyl diphospho-[N-acetyl-alpha-D-glucosaminyl-(1-&gt;4)]-N-acetyl-alpha-D-muramoyl-L-alanyl-D-glutamyl-meso-2,6-diaminopimeloyl-D-alanyl-D-alanine + UDP + H(+). It functions in the pathway cell wall biogenesis; peptidoglycan biosynthesis. Cell wall formation. Catalyzes the transfer of a GlcNAc subunit on undecaprenyl-pyrophosphoryl-MurNAc-pentapeptide (lipid intermediate I) to form undecaprenyl-pyrophosphoryl-MurNAc-(pentapeptide)GlcNAc (lipid intermediate II). In Mycolicibacterium smegmatis (strain ATCC 700084 / mc(2)155) (Mycobacterium smegmatis), this protein is UDP-N-acetylglucosamine--N-acetylmuramyl-(pentapeptide) pyrophosphoryl-undecaprenol N-acetylglucosamine transferase.